The chain runs to 193 residues: Putative 3-methyladenine DNA glycosylase (193 aa).

It belongs to the DNA glycosylase MPG family.

This chain is Putative 3-methyladenine DNA glycosylase, found in Francisella tularensis subsp. holarctica (strain FTNF002-00 / FTA).